Reading from the N-terminus, the 211-residue chain is uncharacterized protein (211 aa).

The N-terminal stretch at 1-20 (MSRVQISTVLAIDTATPAVT) is a signal peptide.

This sequence to M.leprae ML0378.

This is an uncharacterized protein from Mycobacterium tuberculosis (strain CDC 1551 / Oshkosh).